Consider the following 308-residue polypeptide: Glucan 1,3-beta-glucosidase ARB_02797 (308 aa).

The N-terminal stretch at 1-20 is a signal peptide; sequence MRFSTALSLALAVSPAAVFA. Residue glutamate 120 is the Proton donor of the active site. Asparagine 126 carries N-linked (GlcNAc...) asparagine glycosylation. Glutamate 220 (nucleophile) is an active-site residue.

It belongs to the glycosyl hydrolase 17 family.

It is found in the secreted. Its subcellular location is the cell wall. The protein resides in the cytoplasm. The enzyme catalyses Successive hydrolysis of beta-D-glucose units from the non-reducing ends of (1-&gt;3)-beta-D-glucans, releasing alpha-glucose.. Cell wall glucan 1,3-beta-glucosidase involved in cell wall biosynthesis and virulence. Crucial for delivery of beta-1,3-glucan to the biofilm matrix and for accumulation of mature matrix biomass. The sequence is that of Glucan 1,3-beta-glucosidase ARB_02797 from Arthroderma benhamiae (strain ATCC MYA-4681 / CBS 112371) (Trichophyton mentagrophytes).